A 152-amino-acid polypeptide reads, in one-letter code: MFRGVNSISLDDKGRMAVPTRYRSELRESCEGQLVVTVGTDTCLLLFPLPEFEELERKLVKLPALNKQVKRLQRLLIGHAAECELDGQGRFLIPEPLRRFASLDKQVVLIGQGNKFEIWDEVLWDRCRQEWLEEASLEGLEDMGPELGALAF.

2 SpoVT-AbrB domains span residues 5–51 (VNSI…PLPE) and 80–123 (AAEC…DEVL).

Belongs to the MraZ family. As to quaternary structure, forms oligomers.

The protein localises to the cytoplasm. It is found in the nucleoid. This is Transcriptional regulator MraZ from Methylococcus capsulatus (strain ATCC 33009 / NCIMB 11132 / Bath).